Here is a 249-residue protein sequence, read N- to C-terminus: ATP synthase subunit a (249 aa).

5 helical membrane passes run 33-53 (GQVFLTSWFVIAALVVLSLLA), 92-112 (VPFIGTLFLFIFLSNWSGALI), 131-151 (INTTVALALLTSLAYFYAGFS), 196-216 (LVVAVLVLLVPLFVPLPAMIL), and 217-237 (GLFTSAIQALIFATLAASYIG).

The protein belongs to the ATPase A chain family. F-type ATPases have 2 components, CF(1) - the catalytic core - and CF(0) - the membrane proton channel. CF(1) has five subunits: alpha(3), beta(3), gamma(1), delta(1), epsilon(1). CF(0) has four main subunits: a, b, b' and c.

The protein localises to the cellular thylakoid membrane. Its function is as follows. Key component of the proton channel; it plays a direct role in the translocation of protons across the membrane. This chain is ATP synthase subunit a, found in Synechococcus elongatus (strain ATCC 33912 / PCC 7942 / FACHB-805) (Anacystis nidulans R2).